We begin with the raw amino-acid sequence, 439 residues long: Cysteine--tRNA ligase (439 aa).

Position 26 (Cys-26) interacts with Zn(2+). A 'HIGH' region motif is present at residues 28–38 (PTVYNHVHIGN). Zn(2+) is bound by residues Cys-206, His-231, and Glu-235. A 'KMSKS' region motif is present at residues 263–267 (KMSKS). Position 266 (Lys-266) interacts with ATP.

Belongs to the class-I aminoacyl-tRNA synthetase family. Monomer. Zn(2+) serves as cofactor.

It is found in the cytoplasm. The catalysed reaction is tRNA(Cys) + L-cysteine + ATP = L-cysteinyl-tRNA(Cys) + AMP + diphosphate. The polypeptide is Cysteine--tRNA ligase (Malacoplasma penetrans (strain HF-2) (Mycoplasma penetrans)).